The following is a 205-amino-acid chain: Large ribosomal subunit protein bL25 (205 aa).

A disordered region spans residues Pro185–Ala205. Positions Ala186–Ala205 are enriched in low complexity.

The protein belongs to the bacterial ribosomal protein bL25 family. CTC subfamily. Part of the 50S ribosomal subunit; part of the 5S rRNA/L5/L18/L25 subcomplex. Contacts the 5S rRNA. Binds to the 5S rRNA independently of L5 and L18.

Functionally, this is one of the proteins that binds to the 5S RNA in the ribosome where it forms part of the central protuberance. This chain is Large ribosomal subunit protein bL25, found in Cupriavidus taiwanensis (strain DSM 17343 / BCRC 17206 / CCUG 44338 / CIP 107171 / LMG 19424 / R1) (Ralstonia taiwanensis (strain LMG 19424)).